A 314-amino-acid chain; its full sequence is WD repeat domain-containing protein 83 (314 aa).

WD repeat units follow at residues 23–62 (CNQG…LLKT), 65–104 (GHGY…VVRK), 107–146 (GHAG…PDAI), 151–188 (EAKD…MCAD), 189–228 (YLGS…LLGE), 231–272 (GHQN…LVLK), and 275–313 (VGKA…EEGG).

This sequence belongs to the WD repeat MORG1 family.

Its subcellular location is the cytoplasm. Functionally, molecular scaffold protein for various multimeric protein complexes. Acts as a module in the assembly of a multicomponent scaffold for the ERK pathway, linking ERK responses to specific agonists. Also involved in response to hypoxia by acting as a negative regulator of HIF1A/HIF-1-alpha. This is WD repeat domain-containing protein 83 (wdr83) from Xenopus laevis (African clawed frog).